The primary structure comprises 199 residues: Superoxide dismutase [Mn/Fe] (199 aa).

Fe(3+)-binding residues include His-27, His-81, Asp-161, and His-165. Positions 27, 81, 161, and 165 each coordinate Mn(2+).

This sequence belongs to the iron/manganese superoxide dismutase family. As to quaternary structure, homodimer. Mn(2+) is required as a cofactor. Fe(3+) serves as cofactor.

The enzyme catalyses 2 superoxide + 2 H(+) = H2O2 + O2. Its function is as follows. Destroys superoxide anion radicals which are normally produced within the cells and which are toxic to biological systems. Catalyzes the dismutation of superoxide anion radicals into O2 and H2O2 by successive reduction and oxidation of the transition metal ion at the active site. The polypeptide is Superoxide dismutase [Mn/Fe] (sodA) (Staphylococcus epidermidis (strain ATCC 35984 / DSM 28319 / BCRC 17069 / CCUG 31568 / BM 3577 / RP62A)).